A 222-amino-acid polypeptide reads, in one-letter code: Protein-L-isoaspartate O-methyltransferase (222 aa).

The active site involves S65.

The protein belongs to the methyltransferase superfamily. L-isoaspartyl/D-aspartyl protein methyltransferase family.

The protein resides in the cytoplasm. The catalysed reaction is [protein]-L-isoaspartate + S-adenosyl-L-methionine = [protein]-L-isoaspartate alpha-methyl ester + S-adenosyl-L-homocysteine. In terms of biological role, catalyzes the methyl esterification of L-isoaspartyl residues in peptides and proteins that result from spontaneous decomposition of normal L-aspartyl and L-asparaginyl residues. It plays a role in the repair and/or degradation of damaged proteins. The protein is Protein-L-isoaspartate O-methyltransferase of Chlorobium luteolum (strain DSM 273 / BCRC 81028 / 2530) (Pelodictyon luteolum).